The following is a 119-amino-acid chain: Protein Wnt-4 (119 aa).

Serine 1 carries the O-palmitoleoyl serine; by PORCN lipid modification. Intrachain disulfides connect cysteine 69-cysteine 100 and cysteine 85-cysteine 95. N-linked (GlcNAc...) asparagine glycosylation is present at asparagine 86.

The protein belongs to the Wnt family. Palmitoleoylation is required for efficient binding to frizzled receptors. Depalmitoleoylation leads to Wnt signaling pathway inhibition.

The protein localises to the secreted. It localises to the extracellular space. The protein resides in the extracellular matrix. Ligand for members of the frizzled family of seven transmembrane receptors. Plays an important role in embryonic development. The sequence is that of Protein Wnt-4 (WNT-4) from Plestiodon skiltonianus (Western skink).